The primary structure comprises 619 residues: Dihydroxy-acid dehydratase (619 aa).

Asp81 contacts Mg(2+). A [2Fe-2S] cluster-binding site is contributed by Cys122. Asp123 and Lys124 together coordinate Mg(2+). Residue Lys124 is modified to N6-carboxylysine. Cys198 provides a ligand contact to [2Fe-2S] cluster. Glu494 provides a ligand contact to Mg(2+). The active-site Proton acceptor is the Ser520.

Belongs to the IlvD/Edd family. In terms of assembly, homodimer. It depends on [2Fe-2S] cluster as a cofactor. Mg(2+) serves as cofactor.

The catalysed reaction is (2R)-2,3-dihydroxy-3-methylbutanoate = 3-methyl-2-oxobutanoate + H2O. It carries out the reaction (2R,3R)-2,3-dihydroxy-3-methylpentanoate = (S)-3-methyl-2-oxopentanoate + H2O. It participates in amino-acid biosynthesis; L-isoleucine biosynthesis; L-isoleucine from 2-oxobutanoate: step 3/4. The protein operates within amino-acid biosynthesis; L-valine biosynthesis; L-valine from pyruvate: step 3/4. Its function is as follows. Functions in the biosynthesis of branched-chain amino acids. Catalyzes the dehydration of (2R,3R)-2,3-dihydroxy-3-methylpentanoate (2,3-dihydroxy-3-methylvalerate) into 2-oxo-3-methylpentanoate (2-oxo-3-methylvalerate) and of (2R)-2,3-dihydroxy-3-methylbutanoate (2,3-dihydroxyisovalerate) into 2-oxo-3-methylbutanoate (2-oxoisovalerate), the penultimate precursor to L-isoleucine and L-valine, respectively. This is Dihydroxy-acid dehydratase from Neisseria meningitidis serogroup A / serotype 4A (strain DSM 15465 / Z2491).